The following is a 372-amino-acid chain: MEINVQAIVIDNGSDTCKAGFVGEEAPHSEFPSIVGIDQNDSYVGNEAQSKRGILTLKYPIERGIITNWDDMEKIWHHAFYNELGVAPEENIVVLSESPLNPEENREKMAQIMFETFKTPAIYVENQAVFSIYNSGRMTGIVLDSGDSASHVVPVYEGLALPHATSSLGFAGCDLTDQMSLLLNDLGYNLEREIVRDIKEKLSYVSSDFSWEINDPSTLGKSYELPDGQVITIDKELFACPEVLFLPYAFFGTNLDGIDKAIYNSIMKCNDDIHNDLYGNVVLSGGSTMFPGIEYRMYKGLTQLAPSTTEIVINAEPDRKNSVWIGGSILGLVPNFQELCIDKEDYDEYGPSFVNLVKSFREQNHQNYYGEN.

Belongs to the actin family.

Its subcellular location is the cytoplasm. It localises to the cytoskeleton. It catalyses the reaction ATP + H2O = ADP + phosphate + H(+). Functionally, actins are highly conserved proteins that are involved in various types of cell motility and are ubiquitously expressed in all eukaryotic cells. Multiple isoforms are involved in various cellular functions such as cytoskeleton structure, cell mobility, chromosome movement and muscle contraction. In Dictyostelium discoideum (Social amoeba), this protein is Putative actin-27 (act27).